We begin with the raw amino-acid sequence, 167 residues long: UPF0336 protein MAP_4109 (167 aa).

The 104-residue stretch at 21–124 folds into the MaoC-like domain; sequence GREQLRQFAL…RFGADIVVTK (104 aa).

The protein belongs to the UPF0336 family.

The protein is UPF0336 protein MAP_4109 of Mycolicibacterium paratuberculosis (strain ATCC BAA-968 / K-10) (Mycobacterium paratuberculosis).